The chain runs to 54 residues: Ovomucoid (54 aa).

In terms of domain architecture, Kazal-like spans 4-54; sequence VDCSEYPKPACTLEYRPLCGSDSKTYGNKCNFCNAVVESNGTLTLSHFGKC. Disulfide bonds link C6-C36, C14-C33, and C22-C54. N43 carries N-linked (GlcNAc...) asparagine glycosylation.

Its subcellular location is the secreted. The sequence is that of Ovomucoid from Alectoris chukar (Chukar partridge).